A 448-amino-acid chain; its full sequence is Probable glycine dehydrogenase (decarboxylating) subunit 1 (448 aa).

The protein belongs to the GcvP family. N-terminal subunit subfamily. In terms of assembly, the glycine cleavage system is composed of four proteins: P, T, L and H. In this organism, the P 'protein' is a heterodimer of two subunits.

It carries out the reaction N(6)-[(R)-lipoyl]-L-lysyl-[glycine-cleavage complex H protein] + glycine + H(+) = N(6)-[(R)-S(8)-aminomethyldihydrolipoyl]-L-lysyl-[glycine-cleavage complex H protein] + CO2. Functionally, the glycine cleavage system catalyzes the degradation of glycine. The P protein binds the alpha-amino group of glycine through its pyridoxal phosphate cofactor; CO(2) is released and the remaining methylamine moiety is then transferred to the lipoamide cofactor of the H protein. This Geobacillus kaustophilus (strain HTA426) protein is Probable glycine dehydrogenase (decarboxylating) subunit 1.